Consider the following 328-residue polypeptide: L-arabinose transport system permease protein AraH (328 aa).

A run of 10 helical transmembrane segments spans residues 29–49 (VVFA…ATFI), 53–73 (GLGL…FCLA), 79–99 (LSVA…INLT), 104–124 (IGVA…GFVI), 129–149 (INAL…AYII), 171–191 (FGLP…GLLL), 220–240 (TKII…IILA), 249–269 (MTSI…GVSL), 276–296 (ISYV…MNLL), and 297–317 (NISP…AVIF).

Belongs to the binding-protein-dependent transport system permease family. AraH/RbsC subfamily.

The protein localises to the cell inner membrane. Part of the binding-protein-dependent transport system for L-arabinose. Probably responsible for the translocation of the substrate across the membrane. The sequence is that of L-arabinose transport system permease protein AraH (araH) from Escherichia coli (strain K12).